Reading from the N-terminus, the 445-residue chain is Glutamate-1-semialdehyde 2,1-aminomutase (445 aa).

Lys-263 bears the N6-(pyridoxal phosphate)lysine mark.

This sequence belongs to the class-III pyridoxal-phosphate-dependent aminotransferase family. HemL subfamily. Pyridoxal 5'-phosphate serves as cofactor.

It localises to the cytoplasm. It carries out the reaction (S)-4-amino-5-oxopentanoate = 5-aminolevulinate. It participates in porphyrin-containing compound metabolism; protoporphyrin-IX biosynthesis; 5-aminolevulinate from L-glutamyl-tRNA(Glu): step 2/2. This Halorubrum lacusprofundi (strain ATCC 49239 / DSM 5036 / JCM 8891 / ACAM 34) protein is Glutamate-1-semialdehyde 2,1-aminomutase.